The chain runs to 123 residues: Histone H2B (123 aa).

A disordered region spans residues 1-30 (MPPKTSGKAAKKAGKAQKNITKTDKKKKRR). Pro-2 carries the post-translational modification N-methylproline; partial. Residue Lys-44 is modified to N6-succinyllysine. An O-linked (GlcNAc) serine glycan is attached at Ser-110. N6-succinyllysine is present on residues Lys-114 and Lys-118. Lys-118 participates in a covalent cross-link: Glycyl lysine isopeptide (Lys-Gly) (interchain with G-Cter in ubiquitin).

The protein belongs to the histone H2B family. As to quaternary structure, the nucleosome is a histone octamer containing two molecules each of H2A, H2B, H3 and H4 assembled in one H3-H4 heterotetramer and two H2A-H2B heterodimers. The octamer wraps approximately 147 bp of DNA. Post-translationally, phosphorylated by the catalytic component of the Dbf4-dependent kinase (DDK) complex Cdc7. In terms of processing, monoubiquitination of Lys-118 by Bre1 gives a specific tag for epigenetic transcriptional activation and is also prerequisite for histone H3 'Lys-4' and 'Lys-79' methylation. Deubiquitination of Lys-118 by the SAGA complex is involved in activating transcription of a large subset of genes. Methylation at Pro-2 increases upon heat shock. Post-translationally, glcNAcylation at Ser-110 promotes monoubiquitination of Lys-118. It fluctuates in response to extracellular glucose, and associates with transcribed genes.

The protein localises to the nucleus. It is found in the chromosome. In terms of biological role, core component of nucleosome. Nucleosomes wrap and compact DNA into chromatin, limiting DNA accessibility to the cellular machineries which require DNA as a template. Histones thereby play a central role in transcription regulation, DNA repair, DNA replication and chromosomal stability. DNA accessibility is regulated via a complex set of post-translational modifications of histones, also called histone code, and nucleosome remodeling. The protein is Histone H2B (His2B) of Drosophila yakuba (Fruit fly).